Reading from the N-terminus, the 517-residue chain is 6-phosphogluconate dehydrogenase, decarboxylating (517 aa).

NADP(+) is bound by residues 35–40 (GLAVMG), 58–60 (NRT), 100–102 (VKA), and N128. Substrate is bound by residues N128 and 154–156 (SGG). K208 serves as the catalytic Proton acceptor. 211 to 212 (HN) is a binding site for substrate. The active-site Proton donor is the E215. Substrate is bound by residues Y216, K286, R313, R474, and H480.

Belongs to the 6-phosphogluconate dehydrogenase family. As to quaternary structure, homodimer.

The catalysed reaction is 6-phospho-D-gluconate + NADP(+) = D-ribulose 5-phosphate + CO2 + NADPH. The protein operates within carbohydrate degradation; pentose phosphate pathway; D-ribulose 5-phosphate from D-glucose 6-phosphate (oxidative stage): step 3/3. In terms of biological role, catalyzes the oxidative decarboxylation of 6-phosphogluconate to ribulose 5-phosphate and CO(2), with concomitant reduction of NADP to NADPH. This Candida albicans (Yeast) protein is 6-phosphogluconate dehydrogenase, decarboxylating (DOR14).